A 314-amino-acid chain; its full sequence is MSATGRAPCGLPRIGLGTAVQGPRPDPVRAAVLRAIQLGYRHFDTAAHYATEAPIGEAAAEAVRTGLVASREDLFVTSKVWCADAHRDRVLPALRRTLSNLQMEYVDLYMVHWPVTMKAGRFTAPFTPEDFEPFDMRAVWEAMEECHRLGLAKAIGVCNFSCKKLETLLSFATIPPVVNQVEINPVWQQRKLREFCRAKGIQLCAYSPLGAKGTHWGSDSVMDSGVLHEIAKSKGKTVAQVCLRWVYEQGDCLIVKSFDEGRMKENLDIVDWELSEEERQRISKIPQRKINQGRRYVSEHGPYKSFEELWDGEI.

Asp44 serves as a coordination point for NADP(+). Tyr49 acts as the Proton donor in catalysis. His112 is a substrate binding site. Residues 158–159, Gln180, 258–266, and 273–281 contribute to the NADP(+) site; these read CN, FDEGRMKEN, and ELSEEERQR.

It belongs to the aldo/keto reductase family.

The enzyme catalyses 2'-deoxymugineate + NAD(+) = 3''-deamino-3''-oxonicotianamine + NADH + H(+). It carries out the reaction 2'-deoxymugineate + NADP(+) = 3''-deamino-3''-oxonicotianamine + NADPH + H(+). It participates in siderophore biosynthesis. In terms of biological role, catalyzes the reduction of a 3''-keto intermediate during the biosynthesis of 2'-deoxymugineic acid (DMA) from L-Met. Involved in the formation of phytosiderophores (MAs) belonging to the mugineic acid family and required to acquire iron. The protein is Deoxymugineic acid synthase 1 of Zea mays (Maize).